A 548-amino-acid polypeptide reads, in one-letter code: Chaperonin GroEL 2 (548 aa).

Residues 30–33 (TLGP), lysine 51, 87–91 (DGTTT), glycine 415, and aspartate 496 each bind ATP. Residues 529–548 (KDAMPSPDMGGMGGMGGMGF) are disordered. The span at 538–548 (GGMGGMGGMGF) shows a compositional bias: gly residues.

The protein belongs to the chaperonin (HSP60) family. In terms of assembly, forms a cylinder of 14 subunits composed of two heptameric rings stacked back-to-back. Interacts with the co-chaperonin GroES.

It localises to the cytoplasm. It carries out the reaction ATP + H2O + a folded polypeptide = ADP + phosphate + an unfolded polypeptide.. In terms of biological role, together with its co-chaperonin GroES, plays an essential role in assisting protein folding. The GroEL-GroES system forms a nano-cage that allows encapsulation of the non-native substrate proteins and provides a physical environment optimized to promote and accelerate protein folding. The protein is Chaperonin GroEL 2 of Rhodospirillum rubrum (strain ATCC 11170 / ATH 1.1.1 / DSM 467 / LMG 4362 / NCIMB 8255 / S1).